Here is a 145-residue protein sequence, read N- to C-terminus: 3-hydroxyacyl-[acyl-carrier-protein] dehydratase FabZ (145 aa).

Residue histidine 47 is part of the active site.

Belongs to the thioester dehydratase family. FabZ subfamily.

Its subcellular location is the cytoplasm. The enzyme catalyses a (3R)-hydroxyacyl-[ACP] = a (2E)-enoyl-[ACP] + H2O. In terms of biological role, involved in unsaturated fatty acids biosynthesis. Catalyzes the dehydration of short chain beta-hydroxyacyl-ACPs and long chain saturated and unsaturated beta-hydroxyacyl-ACPs. This chain is 3-hydroxyacyl-[acyl-carrier-protein] dehydratase FabZ, found in Polaromonas naphthalenivorans (strain CJ2).